Consider the following 413-residue polypeptide: Eukaryotic initiation factor 4A-9 (413 aa).

A Q motif motif is present at residues 40 to 68 (HSFDAMGLKENLLRGIYAYGFEKPSAIQQ). Residues 71–241 (IVPFCKGLDV…RKFMNKPVRI (171 aa)) form the Helicase ATP-binding domain. 84–91 (AQSGTGKT) lines the ATP pocket. The short motif at 189 to 192 (DEAD) is the DEAD box element. The Helicase C-terminal domain occupies 252–413 (GIKQFYVNVD…ELPANVADLL (162 aa)).

This sequence belongs to the DEAD box helicase family. eIF4A subfamily. In terms of assembly, eIF4F is a multi-subunit complex, the composition of which varies with external and internal environmental conditions. It is composed of at least EIF4A, EIF4E and EIF4G.

It catalyses the reaction ATP + H2O = ADP + phosphate + H(+). Its function is as follows. ATP-dependent RNA helicase which is a subunit of the eIF4F complex involved in cap recognition and is required for mRNA binding to ribosome. In the current model of translation initiation, eIF4A unwinds RNA secondary structures in the 5'-UTR of mRNAs which is necessary to allow efficient binding of the small ribosomal subunit, and subsequent scanning for the initiator codon. This chain is Eukaryotic initiation factor 4A-9, found in Nicotiana tabacum (Common tobacco).